The following is a 311-amino-acid chain: Bifunctional protein FolD (311 aa).

Residues 180–182 (GRS), S209, and I250 contribute to the NADP(+) site.

The protein belongs to the tetrahydrofolate dehydrogenase/cyclohydrolase family. As to quaternary structure, homodimer.

The enzyme catalyses (6R)-5,10-methylene-5,6,7,8-tetrahydrofolate + NADP(+) = (6R)-5,10-methenyltetrahydrofolate + NADPH. It carries out the reaction (6R)-5,10-methenyltetrahydrofolate + H2O = (6R)-10-formyltetrahydrofolate + H(+). It participates in one-carbon metabolism; tetrahydrofolate interconversion. In terms of biological role, catalyzes the oxidation of 5,10-methylenetetrahydrofolate to 5,10-methenyltetrahydrofolate and then the hydrolysis of 5,10-methenyltetrahydrofolate to 10-formyltetrahydrofolate. The polypeptide is Bifunctional protein FolD (Haloquadratum walsbyi (strain DSM 16790 / HBSQ001)).